Consider the following 190-residue polypeptide: Holliday junction branch migration complex subunit RuvA (190 aa).

Residues 1–64 (MIGRITGTLI…EDAQLLYGFG (64 aa)) form a domain I region. The tract at residues 65-137 (SSAERSTFRE…MRGKLGADIG (73 aa)) is domain II. The interval 137–141 (GATPH) is flexible linker. The tract at residues 142–190 (AASGHQSDILNALLALGYSDKESQAALKKLPDGVDVSEGIRLALKALVR) is domain III.

This sequence belongs to the RuvA family. In terms of assembly, homotetramer. Forms an RuvA(8)-RuvB(12)-Holliday junction (HJ) complex. HJ DNA is sandwiched between 2 RuvA tetramers; dsDNA enters through RuvA and exits via RuvB. An RuvB hexamer assembles on each DNA strand where it exits the tetramer. Each RuvB hexamer is contacted by two RuvA subunits (via domain III) on 2 adjacent RuvB subunits; this complex drives branch migration. In the full resolvosome a probable DNA-RuvA(4)-RuvB(12)-RuvC(2) complex forms which resolves the HJ.

It localises to the cytoplasm. Functionally, the RuvA-RuvB-RuvC complex processes Holliday junction (HJ) DNA during genetic recombination and DNA repair, while the RuvA-RuvB complex plays an important role in the rescue of blocked DNA replication forks via replication fork reversal (RFR). RuvA specifically binds to HJ cruciform DNA, conferring on it an open structure. The RuvB hexamer acts as an ATP-dependent pump, pulling dsDNA into and through the RuvAB complex. HJ branch migration allows RuvC to scan DNA until it finds its consensus sequence, where it cleaves and resolves the cruciform DNA. In Bordetella pertussis (strain Tohama I / ATCC BAA-589 / NCTC 13251), this protein is Holliday junction branch migration complex subunit RuvA.